Consider the following 182-residue polypeptide: Probable RNA 2'-phosphotransferase (182 aa).

This sequence belongs to the KptA/TPT1 family.

Its function is as follows. Removes the 2'-phosphate from RNA via an intermediate in which the phosphate is ADP-ribosylated by NAD followed by a presumed transesterification to release the RNA and generate ADP-ribose 1''-2''-cyclic phosphate (APPR&gt;P). May function as an ADP-ribosylase. This chain is Probable RNA 2'-phosphotransferase, found in Trichormus variabilis (strain ATCC 29413 / PCC 7937) (Anabaena variabilis).